A 142-amino-acid polypeptide reads, in one-letter code: Large-conductance mechanosensitive channel (142 aa).

3 consecutive transmembrane segments (helical) span residues 14–34, 38–58, and 82–102; these read VMDL…VDSV, LVMP…NYFL, and GNFI…FLLI.

This sequence belongs to the MscL family. Homopentamer.

Its subcellular location is the cell inner membrane. Functionally, channel that opens in response to stretch forces in the membrane lipid bilayer. May participate in the regulation of osmotic pressure changes within the cell. This chain is Large-conductance mechanosensitive channel, found in Rhizobium meliloti (strain 1021) (Ensifer meliloti).